A 123-amino-acid polypeptide reads, in one-letter code: Histone H2B.3 (123 aa).

Positions 1-30 (MPPKVSGKAAKKAGKAQKNISKGDKKKNRK) are disordered. Serine 110 carries an O-linked (GlcNAc) serine glycan. Lysine 118 participates in a covalent cross-link: Glycyl lysine isopeptide (Lys-Gly) (interchain with G-Cter in ubiquitin).

Belongs to the histone H2B family. As to quaternary structure, the nucleosome is a histone octamer containing two molecules each of H2A, H2B, H3 and H4 assembled in one H3-H4 heterotetramer and two H2A-H2B heterodimers. The octamer wraps approximately 147 bp of DNA. In terms of processing, monoubiquitination of Lys-118 gives a specific tag for epigenetic transcriptional activation and is also prerequisite for histone H3 'Lys-4' and 'Lys-79' methylation. GlcNAcylation at Ser-110 promotes monoubiquitination of Lys-118. It fluctuates in response to extracellular glucose, and associates with transcribed genes.

The protein localises to the nucleus. It localises to the chromosome. Its function is as follows. Core component of nucleosome. Nucleosomes wrap and compact DNA into chromatin, limiting DNA accessibility to the cellular machineries which require DNA as a template. Histones thereby play a central role in transcription regulation, DNA repair, DNA replication and chromosomal stability. DNA accessibility is regulated via a complex set of post-translational modifications of histones, also called histone code, and nucleosome remodeling. This chain is Histone H2B.3, found in Tigriopus californicus (Marine copepod).